The primary structure comprises 2273 residues: KGKTITHGQSWGARRIHSHFYITIFTITCIRIGQYKLALYLDPYRFYNITGSQIVRLKGQRPEYRKRIFAHSYRHSSRIGLNFPSRRRYSNYVDRGNIHKHTRLPPQFIGLNTVESAQPSILRDFVDLRGGHTVISKILIANNGIAAVKEMRSIRKWAYETFNDEKIIQFVVMATPDDLHANSEYIRMADQYVQVPGGTNNNNYANIDLILDVAEQTDVDAVWAGWGHASENPCLPELLASSQRKILFIGPPGRAMRSLGDKISSTIVAQSAKIPCIPWSGSHIDTIHIDNKTNFVSVPDDVYVRGCCSSPEDALEKAKLIGFPVMIKASEGGGGKGIRRVDNQDDFIALYRQAVNETPGSPMFVMKVVTDARHLEVQLLADQYGTNITLFGRDCSIQRRHQKIIEEAPVTITKPETFQRMERAAIRLGELVGYVSAGTVEYLYSPKDDKFYFLELNPRLQVEHPTTEMISGVNLPATQLQIAMGIPMHMISDIRKLYGLDPTGTSYIDFKNLKRPSPKGHCISCRITSEDPNEGFKPSTGKIHELNFRSSSNVWGYFSVGNNGAIHSFSDSQFGHIFAVGNDRQDAKQNMVLALKDFSIRGDFKTPIEYLIELLETRDFESNNISTGWLDDLILKNLSSDSKLDPTLAIICGAAMKAYVFTEKVRNKYLELLRRGQVPPKDFLKTKFPVDFIFDNNRYLFNVAQSSEEQFILSINKSQCEVNVQKLSSDCLLISVDGKCHTVYWKDDIRGTRLSIDSNTIFLEAELNPTQVISPTPGKLVKYLVRSGDHVFAGQQYAEMEIMKMQMPLVAKSDGVIELLRQPGSIIEAGDVIAKLTLDSPSKANESSLYRGELPVLGPPLIEGSRPNHKLRVLINRLENILNGYHENSGIETTLKELIKILRDGRLPYSEWDSQISTVRNRLPRQLNEGLGNLVKKSVSFPAKELHKLMKRYLEENTNDHVVYVALQPLLKISERYSEGLANHECEIFLKLIKKYYAVEKIFENHDIHEERNLLNLRRKDLTNLKEILCISLSHANIVAKNKLVTAILHEYEPLCQDSSKMSLKFRAVIHDLASLESKWAKEVSVKARSVLLRGIFPPIKKRKEHIKTLLQLHIKDTGAENIHSRNIYSCMRDFGNLIHSNLIQLQDLFFFFGHQDTALSSIASEIYARYAYGNYQLKSIKIHKGAPDLLMSWQFSSLRNYLVNSDGESDEFTKLSKPPSTSGKSSANSFGLLVNMRALESLEKTLDEVYEQIHIPEERLSSGENSLIVNILSPIRYRSENDLIKTLKIKLHENERGLSKLKVNRITFAFIAANAPAVKFYSFDGTTYDEIPQIRNMDPSYEAPLELGKMSNYKIRSLPTYDSSIRIFEGISKFTPLDKRFFVRKIINSFMYNDQKTTEENLKAEINAQVVYMLEHLGAVDISNSDLNHIFLSFNTVLNIPVHRLEEIVSTILKTHETRLFQERITDVEICISVECLETKKPAPLRLLISNKSGYVVKIETYYEKIGKNGNLILEPCSEQSHYSQKSLSLPYSVKDWLQPKRYKAQFMGTTYVYDFPGLFHQAAIQQWKRYFPKHKLNDSFFSWVELIEQNGNLIKVNREPGLNNIGMVAFEIMVQTPEYPEGRNMIVISNDITYNIGSFGPREDLFFDRVTNYARERGIPRIYLAANSGAKLGIAEELIPLFRVAWNDPSDPTKGFQYLYLAPKDMQLLKDSGKGNSVVVEHKMVYGEERYIIKAIVGFEEGLGVECLQGSGLIAGATSKAYRDIFTITAVTCRSVGIGSYLVRLGQRTIQVEDKPIILTGASAINKVLGTDIYTSNLQIGGTQIMYKNGIAHLTASNDMKAIEKIMTWLSYVPAKRDMSPPLLETMDRWDRDVDFKPAKQVPYEARWLIEGKWDSNNNFQSGLFDKDSFFETLSGWAKGVIVGRARLGGIPVGVIAVETKTIEEIIPADPANLDSSEFSVKEAGQVWYPNSAFKTAQTINDFNYGEQLPLIILANWRGFSGGQRDMYNEVLKYGSFIVDALVDYKQPILIYIPPFGELRGGSWVVIDPTINPEQMEMYADVESRGGVLEPDGVVSIKYRKEKMIETMIRLDSTYGHLRRTLTEKKLSLEKQNDLTKRLKIRERQLIPIYNQISIQFADLHDRSTRMLVKGVIRNELEWKKSRRFLYWRLRRRLNEGQVIKRLQKKTCDNKTKMKYDDLLKIVQSWYNDLDVNDDRAVVEFIERNSKKIDKNIEEFEISLLIDELKKKFEDRRGNIVLEELTRLVDSKRKR.

Residues 1 to 104 constitute a mitochondrion transit peptide; that stretch reads KGKTITHGQS…RGNIHKHTRL (104 aa). Residues 134–635 form the Biotin carboxylation domain; the sequence is VISKILIANN…STGWLDDLIL (502 aa). The region spanning 292–484 is the ATP-grasp domain; the sequence is KTNFVSVPDD…LPATQLQIAM (193 aa). Residue 332 to 337 coordinates ATP; that stretch reads GGGGKG. The active site involves Arg-459. The Biotinyl-binding domain occupies 763 to 837; sequence LEAELNPTQV…EAGDVIAKLT (75 aa). An N6-biotinyllysine modification is found at Lys-804. The CoA carboxyltransferase N-terminal domain occupies 1532–1867; it reads PYSVKDWLQP…KRDMSPPLLE (336 aa). Residues 1532–2187 are carboxyltransferase; it reads PYSVKDWLQP…EGQVIKRLQK (656 aa). CoA contacts are provided by Arg-1776, Lys-2080, and Arg-2082. A CoA carboxyltransferase C-terminal domain is found at 1871–2187; that stretch reads RWDRDVDFKP…EGQVIKRLQK (317 aa).

The cofactor is biotin.

Its subcellular location is the mitochondrion. It catalyses the reaction hydrogencarbonate + acetyl-CoA + ATP = malonyl-CoA + ADP + phosphate + H(+). The catalysed reaction is N(6)-biotinyl-L-lysyl-[protein] + hydrogencarbonate + ATP = N(6)-carboxybiotinyl-L-lysyl-[protein] + ADP + phosphate + H(+). It participates in lipid metabolism; malonyl-CoA biosynthesis; malonyl-CoA from acetyl-CoA: step 1/1. In terms of biological role, catalyzes the rate-limiting reaction in the mitochondrial fatty acid synthesis (FAS) type II pathway. Responsible for the production of the mitochondrial malonyl-CoA, used for the biosynthesis of the cofactor lipoic acid. This protein carries three functions: biotin carboxyl carrier protein, biotin carboxylase, and carboxyltransferase. The protein is Acetyl-CoA carboxylase, mitochondrial (HFA1) of Saccharomyces cerevisiae (strain Lalvin EC1118 / Prise de mousse) (Baker's yeast).